The sequence spans 254 residues: MSLTNKNVVFVAGLGGIGLDTSRELVKRDLKNLVILDRIDNPAAIAELKAINPKVTVTFYPYDVTVPVAETTKLLKTIFAQIKTIDVLINGAGILDDHQIERTIAVNYTGLVNTTTAILDFWDKRKGGPGGIICNIGSVTGFNAIYQVPVYSGSKAAVVNFTSSLAKLAPITGVTAYTVNPGITKTTLVHKFNSWLDVEPRVAEKLLEHPTQTSQQCAENFVKAIELNKNGAIWKLDLGTLESITWTKHWDSGI.

10-33 (FVAGLGGIGLDTSRELVKRDLKNL) is a binding site for NAD(+). Position 138 (Ser138) interacts with substrate. Tyr151 functions as the Proton acceptor in the catalytic mechanism.

It belongs to the short-chain dehydrogenases/reductases (SDR) family. In terms of assembly, homodimer.

The catalysed reaction is a primary alcohol + NAD(+) = an aldehyde + NADH + H(+). It carries out the reaction a secondary alcohol + NAD(+) = a ketone + NADH + H(+). This Drosophila madeirensis (Fruit fly) protein is Alcohol dehydrogenase (Adh).